A 338-amino-acid polypeptide reads, in one-letter code: Fusarubin cluster-specific transcription factor fsr6 (338 aa).

The segment at residues 16–44 (CDACTTAKVRCSRTHPCERCEDNGQAKEC) is a DNA-binding region (zn(2)-C6 fungal-type).

Its subcellular location is the nucleus. Functionally, transcription factor that regulates the expression of the gene cluster that mediates the biosynthesis of fusarubins, highly pigmented naphthoquinones responsible for the coloration of the fruiting bodies. The polypeptide is Fusarubin cluster-specific transcription factor fsr6 (Gibberella fujikuroi (strain CBS 195.34 / IMI 58289 / NRRL A-6831) (Bakanae and foot rot disease fungus)).